Consider the following 188-residue polypeptide: Xanthine phosphoribosyltransferase (188 aa).

Xanthine contacts are provided by L20 and N27. 127 to 131 (ANGNA) lines the 5-phospho-alpha-D-ribose 1-diphosphate pocket. Xanthine is bound at residue K155.

This sequence belongs to the purine/pyrimidine phosphoribosyltransferase family. Xpt subfamily. As to quaternary structure, homodimer.

It localises to the cytoplasm. It catalyses the reaction XMP + diphosphate = xanthine + 5-phospho-alpha-D-ribose 1-diphosphate. Its pathway is purine metabolism; XMP biosynthesis via salvage pathway; XMP from xanthine: step 1/1. Its function is as follows. Converts the preformed base xanthine, a product of nucleic acid breakdown, to xanthosine 5'-monophosphate (XMP), so it can be reused for RNA or DNA synthesis. The sequence is that of Xanthine phosphoribosyltransferase from Phocaeicola vulgatus (strain ATCC 8482 / DSM 1447 / JCM 5826 / CCUG 4940 / NBRC 14291 / NCTC 11154) (Bacteroides vulgatus).